A 298-amino-acid polypeptide reads, in one-letter code: Ribosomal RNA small subunit methyltransferase H (298 aa).

S-adenosyl-L-methionine contacts are provided by residues 37-39 (GGH), D57, L91, D105, and Q112.

The protein belongs to the methyltransferase superfamily. RsmH family.

It localises to the cytoplasm. It carries out the reaction cytidine(1402) in 16S rRNA + S-adenosyl-L-methionine = N(4)-methylcytidine(1402) in 16S rRNA + S-adenosyl-L-homocysteine + H(+). Specifically methylates the N4 position of cytidine in position 1402 (C1402) of 16S rRNA. This Kosmotoga olearia (strain ATCC BAA-1733 / DSM 21960 / TBF 19.5.1) protein is Ribosomal RNA small subunit methyltransferase H.